The following is a 247-amino-acid chain: Type III pantothenate kinase (247 aa).

An ATP-binding site is contributed by 7 to 14 (AIGNSRWH). Substrate-binding positions include Tyr91 and 95–98 (GLDR). Asp97 functions as the Proton acceptor in the catalytic mechanism. Asp117 contributes to the K(+) binding site. ATP is bound at residue Thr120. Thr172 contacts substrate.

This sequence belongs to the type III pantothenate kinase family. As to quaternary structure, homodimer. It depends on NH4(+) as a cofactor. The cofactor is K(+).

Its subcellular location is the cytoplasm. The catalysed reaction is (R)-pantothenate + ATP = (R)-4'-phosphopantothenate + ADP + H(+). Its pathway is cofactor biosynthesis; coenzyme A biosynthesis; CoA from (R)-pantothenate: step 1/5. Its function is as follows. Catalyzes the phosphorylation of pantothenate (Pan), the first step in CoA biosynthesis. The protein is Type III pantothenate kinase of Synechococcus elongatus (strain ATCC 33912 / PCC 7942 / FACHB-805) (Anacystis nidulans R2).